Here is a 271-residue protein sequence, read N- to C-terminus: tRNA pseudouridine synthase A (271 aa).

The Nucleophile role is filled by Asp-56. Residue Tyr-120 participates in substrate binding.

This sequence belongs to the tRNA pseudouridine synthase TruA family. In terms of assembly, homodimer.

It catalyses the reaction uridine(38/39/40) in tRNA = pseudouridine(38/39/40) in tRNA. Functionally, formation of pseudouridine at positions 38, 39 and 40 in the anticodon stem and loop of transfer RNAs. In Janthinobacterium sp. (strain Marseille) (Minibacterium massiliensis), this protein is tRNA pseudouridine synthase A.